Reading from the N-terminus, the 1718-residue chain is PR domain zinc finger protein 2 (1718 aa).

The SET domain occupies 28 to 141 (EEVRLFPSAV…PGEELLVWYN (114 aa)). The segment at 155 to 335 (ERASARSKRS…TSEETLEDCS (181 aa)) is disordered. Positions 159-173 (ARSKRSSPKSRKGKK) are enriched in basic residues. Polar residues predominate over residues 189–202 (QLKTSEPDFTSANM). The segment covering 204-216 (DSAEGPKEDEEKP) has biased composition (basic and acidic residues). A compositionally biased stretch (acidic residues) spans 265–297 (DLGEEEEEEEEEDEEEEEDDDDDELEDEGEEEA). The tract at residues 294-316 (EEEASMPNENSVKEPEIRCDEKP) is retinoblastoma protein binding. Basic and acidic residues predominate over residues 304–327 (SVKEPEIRCDEKPEDLLEEPKTTS). A Glycyl lysine isopeptide (Lys-Gly) (interchain with G-Cter in SUMO2) cross-link involves residue K347. C2H2-type zinc fingers lie at residues 360–382 (FPCQ…MHIH) and 390–412 (FKCK…ERRH). The segment at 405–457 (RRRHERRHEAGLKRKPSQTLQPSEDLADGKASGENVASKDDSSPPSLGPDCLI) is disordered. S421 is subject to Phosphoserine. A C2H2-type 3 zinc finger spans residues 483–506 (HPCKYCKKVFGTHTNMRRHQRRVH). Disordered regions lie at residues 513 to 550 (KGVR…EGEA) and 622 to 660 (EDLP…DPMV). S643 is modified (phosphoserine). Glycyl lysine isopeptide (Lys-Gly) (interchain with G-Cter in SUMO2) cross-links involve residues K651, K690, and K692. A disordered region spans residues 729–797 (TSSRFKRRTS…GRDERETVSP (69 aa)). A compositionally biased stretch (low complexity) spans 738–748 (SSPPSSPQHSP). Phosphoserine is present on S743. K774 participates in a covalent cross-link: Glycyl lysine isopeptide (Lys-Gly) (interchain with G-Cter in SUMO2). 3 positions are modified to phosphoserine: S781, S785, and S796. Glycyl lysine isopeptide (Lys-Gly) (interchain with G-Cter in SUMO2) cross-links involve residues K866 and K879. The segment at 903 to 1083 (VENPADGTRS…SPPPLSAISS (181 aa)) is disordered. Residues 951–969 (LQTPSLSSGQLPPLLIPTD) show a composition bias toward low complexity. 2 consecutive short sequence motifs (SH3-binding) follow at residues 970 to 979 (PSSPPPCPPV) and 985 to 998 (PPPP…LPAP). Pro residues predominate over residues 970–997 (PSSPPPCPPVLTVATPPPPLLPTVPLPA). The segment covering 1018-1027 (SPLPILSPTV) has biased composition (low complexity). Over residues 1028 to 1038 (SPSPSPIPPVE) the composition is skewed to pro residues. The SH3-binding motif lies at 1028–1052 (SPSPSPIPPVEPLMSAASPGPPTLS). Positions 1042–1072 (SAASPGPPTLSSSSSSSSSSSSFSSSSSSSS) are enriched in low complexity. C2H2-type zinc fingers lie at residues 1134–1156 (FVCN…LSIH), 1162–1185 (FKCE…FLLH), and 1191–1214 (FVCS…RDLH). Glycyl lysine isopeptide (Lys-Gly) (interchain with G-Cter in SUMO2) cross-links involve residues K1147 and K1151. Positions 1244–1265 (HMQSLPEDPLETSKEEEELNDS) are disordered. Acidic residues predominate over residues 1251 to 1265 (DPLETSKEEEELNDS). Glycyl lysine isopeptide (Lys-Gly) (interchain with G-Cter in SUMO2) cross-links involve residues K1257 and K1281. Residues 1333-1355 (IRCTKCGKGVDNMPELHKHILAC) form a C2H2-type 7; atypical zinc finger. A C2H2-type 8; atypical zinc finger spans residues 1455–1478 (HICPYCNREFTYIGSLNKHAAFSC). Disordered stretches follow at residues 1478–1576 (CPKK…LRNS), 1589–1612 (GKKP…RSLH), and 1625–1652 (KSTL…VTRS). Positions 1486–1498 (PKKKVSHSSKKGG) are enriched in basic residues. A compositionally biased stretch (low complexity) spans 1499–1511 (HSSPASSDKNSNS). Polar residues-rich tracts occupy residues 1525 to 1556 (QSMQ…SKQN) and 1599 to 1608 (HSAQLSSKTS). A compositionally biased stretch (basic and acidic residues) spans 1635–1645 (DRFNIKSRERS).

It belongs to the class V-like SAM-binding methyltransferase superfamily. As to quaternary structure, binds to the retinoblastoma protein (RB). Interacts with GATA3. As to expression, highly expressed in retinoblastoma cell lines and in brain tumors. Also expressed in a number of other cell lines and in brain, heart, skeletal muscle, liver and spleen. Isoform 1 is expressed in testis at much higher level than isoform 3.

It localises to the nucleus. The enzyme catalyses L-lysyl(9)-[histone H3] + 3 S-adenosyl-L-methionine = N(6),N(6),N(6)-trimethyl-L-lysyl(9)-[histone H3] + 3 S-adenosyl-L-homocysteine + 3 H(+). Its function is as follows. S-adenosyl-L-methionine-dependent histone methyltransferase that specifically methylates 'Lys-9' of histone H3. May function as a DNA-binding transcription factor. Binds to the macrophage-specific TPA-responsive element (MTE) of the HMOX1 (heme oxygenase 1) gene and may act as a transcriptional activator of this gene. This chain is PR domain zinc finger protein 2 (PRDM2), found in Homo sapiens (Human).